A 187-amino-acid polypeptide reads, in one-letter code: Peptidyl-tRNA hydrolase (187 aa).

Phe14 contributes to the tRNA binding site. Catalysis depends on His19, which acts as the Proton acceptor. TRNA-binding residues include Tyr64, Asn66, and Asn112.

This sequence belongs to the PTH family. As to quaternary structure, monomer.

Its subcellular location is the cytoplasm. The enzyme catalyses an N-acyl-L-alpha-aminoacyl-tRNA + H2O = an N-acyl-L-amino acid + a tRNA + H(+). Its function is as follows. Hydrolyzes ribosome-free peptidyl-tRNAs (with 1 or more amino acids incorporated), which drop off the ribosome during protein synthesis, or as a result of ribosome stalling. In terms of biological role, catalyzes the release of premature peptidyl moieties from peptidyl-tRNA molecules trapped in stalled 50S ribosomal subunits, and thus maintains levels of free tRNAs and 50S ribosomes. This chain is Peptidyl-tRNA hydrolase, found in Oceanobacillus iheyensis (strain DSM 14371 / CIP 107618 / JCM 11309 / KCTC 3954 / HTE831).